The following is a 400-amino-acid chain: Eukaryotic translation initiation factor 3 subunit M (400 aa).

A PCI domain is found at 180 to 354 (LIAKIYSALV…QSFAVHRAQK (175 aa)).

This sequence belongs to the eIF-3 subunit M family. As to quaternary structure, component of the eukaryotic translation initiation factor 3 (eIF-3) complex.

The protein localises to the cytoplasm. Its function is as follows. Component of the eukaryotic translation initiation factor 3 (eIF-3) complex, which is involved in protein synthesis of a specialized repertoire of mRNAs and, together with other initiation factors, stimulates binding of mRNA and methionyl-tRNAi to the 40S ribosome. The eIF-3 complex specifically targets and initiates translation of a subset of mRNAs involved in cell proliferation. The protein is Eukaryotic translation initiation factor 3 subunit M of Yarrowia lipolytica (strain CLIB 122 / E 150) (Yeast).